A 179-amino-acid polypeptide reads, in one-letter code: Sec-independent protein translocase protein TatB (179 aa).

Residues 1 to 21 traverse the membrane as a helical segment; sequence MFDLGFWEVLIIMLIGLLILG. Composition is skewed to basic and acidic residues over residues 75 to 86 and 94 to 106; these read KDVEKNARRFEA and TFRD…DDAA. A disordered region spans residues 75–179; the sequence is KDVEKNARRF…QGGGGEEKRQ (105 aa).

Belongs to the TatB family. The Tat system comprises two distinct complexes: a TatABC complex, containing multiple copies of TatA, TatB and TatC subunits, and a separate TatA complex, containing only TatA subunits. Substrates initially bind to the TatABC complex, which probably triggers association of the separate TatA complex to form the active translocon.

It localises to the cell inner membrane. Part of the twin-arginine translocation (Tat) system that transports large folded proteins containing a characteristic twin-arginine motif in their signal peptide across membranes. Together with TatC, TatB is part of a receptor directly interacting with Tat signal peptides. TatB may form an oligomeric binding site that transiently accommodates folded Tat precursor proteins before their translocation. The protein is Sec-independent protein translocase protein TatB of Alkalilimnicola ehrlichii (strain ATCC BAA-1101 / DSM 17681 / MLHE-1).